Reading from the N-terminus, the 193-residue chain is Holliday junction branch migration complex subunit RuvA (193 aa).

Residues 1-63 form a domain I region; it reads MIHHLKGQLI…EDSHTLYGFA (63 aa). The interval 64-142 is domain II; sequence EKSEREIFRL…KVLGDDEVFV (79 aa). The interval 143-145 is flexible linker; it reads SQS. The interval 145–193 is domain III; that stretch reads SNTNKEEALSALEILGYNRRQAGKVVEKILKEDPESTVESIIKMALKKL.

This sequence belongs to the RuvA family. In terms of assembly, homotetramer. Forms an RuvA(8)-RuvB(12)-Holliday junction (HJ) complex. HJ DNA is sandwiched between 2 RuvA tetramers; dsDNA enters through RuvA and exits via RuvB. An RuvB hexamer assembles on each DNA strand where it exits the tetramer. Each RuvB hexamer is contacted by two RuvA subunits (via domain III) on 2 adjacent RuvB subunits; this complex drives branch migration. In the full resolvosome a probable DNA-RuvA(4)-RuvB(12)-RuvC(2) complex forms which resolves the HJ.

The protein localises to the cytoplasm. Its function is as follows. The RuvA-RuvB-RuvC complex processes Holliday junction (HJ) DNA during genetic recombination and DNA repair, while the RuvA-RuvB complex plays an important role in the rescue of blocked DNA replication forks via replication fork reversal (RFR). RuvA specifically binds to HJ cruciform DNA, conferring on it an open structure. The RuvB hexamer acts as an ATP-dependent pump, pulling dsDNA into and through the RuvAB complex. HJ branch migration allows RuvC to scan DNA until it finds its consensus sequence, where it cleaves and resolves the cruciform DNA. This Christiangramia forsetii (strain DSM 17595 / CGMCC 1.15422 / KT0803) (Gramella forsetii) protein is Holliday junction branch migration complex subunit RuvA.